We begin with the raw amino-acid sequence, 331 residues long: Aromatic 2-oxoacid reductase (331 aa).

NAD(+) contacts are provided by residues 154 to 155 (RI), Asp175, 205 to 206 (AP), Asn211, 232 to 234 (AAR), and Asp258. Arg234 is a catalytic residue. Glu263 is a catalytic residue. Residue His295 is the Proton donor of the active site.

This sequence belongs to the D-isomer specific 2-hydroxyacid dehydrogenase family.

The catalysed reaction is (R)-3-phenyllactate + NAD(+) = 3-phenylpyruvate + NADH + H(+). It carries out the reaction (2R)-2-hydroxy-3-(4-hydroxyphenyl)propanoate + NAD(+) = 3-(4-hydroxyphenyl)pyruvate + NADH + H(+). The enzyme catalyses 3-(indol-3-yl)lactate + NAD(+) = indole-3-pyruvate + NADH + H(+). It functions in the pathway amino-acid degradation. In terms of biological role, essential for the reductive metabolism of L-phenylalanine, L-tyrosine and L-tryptophan. Catalyzes the conversion of phenylpyruvic acid to phenyllactic acid, 4-hydroxy-phenylpyruvic acid to 4-hydroxy-phenyllactic acid, and indolepyruvic acid to indolelactic acid. This Clostridium sporogenes (strain ATCC 15579) protein is Aromatic 2-oxoacid reductase.